The following is a 2220-amino-acid chain: Non-reducing polyketide synthase stbA (2220 aa).

The N-terminal acylcarrier protein transacylase domain (SAT) stretch occupies residues 10 to 255 (IFSPQNSPPK…HDATNTDMAQ (246 aa)). In terms of domain architecture, Ketosynthase family 3 (KS3) spans 379 to 803 (SDAIAVVGAG…GSNSALICSE (425 aa)). Active-site for beta-ketoacyl synthase activity residues include C551, H687, and H726. Positions 906-1207 (LAFSGQSRTN…ADATQHTFQA (302 aa)) are malonyl-CoA:ACP transacylase (MAT) domain. The For acyl/malonyl transferase activity role is filled by S993. Residues 1287 to 1414 (EPRAAQLVRY…GDFTMTAGPH (128 aa)) form an N-terminal hotdog fold region. Residues 1287 to 1589 (EPRAAQLVRY…FHKTSMTKLL (303 aa)) enclose the PKS/mFAS DH domain. The tract at residues 1292 to 1588 (QLVRYKGALG…HFHKTSMTKL (297 aa)) is product template (PT) domain. H1323 (proton acceptor; for dehydratase activity) is an active-site residue. Residues 1436–1589 (DAEKLRKRTA…FHKTSMTKLL (154 aa)) are C-terminal hotdog fold. The active-site Proton donor; for dehydratase activity is D1500. Carrier domains follow at residues 1634 to 1711 (AAGP…SGGA) and 1742 to 1821 (PAGP…AADV). S1671 and S1779 each carry O-(pantetheine 4'-phosphoryl)serine. Residues 1879 to 2210 (TRFRMETVVY…YDFIFTELEN (332 aa)) are thioesterase (TE) domain. Active-site for thioesterase activity residues include S1999 and D2148.

It carries out the reaction 3 malonyl-CoA + acetyl-CoA + 2 H(+) = orsellinate + 3 CO2 + 4 CoA. It functions in the pathway secondary metabolite biosynthesis; terpenoid biosynthesis. In terms of biological role, non-reducing polyketide synthase; part of the cluster that mediates the biosynthesis of LL-Z1272-beta, also known as ilicicolin B, a prenylated aryl-aldehyde produced by several fungi and that serves as a key pathway intermediate for many fungal meroterpenoids. The first step in the pathway is performed by the non-reducing polyketide synthase stbA that produces orsellinic acid by condensing acetyl-CoA with 3 malonyl-CoA units. The prenyltransferase stbC then prenylates orsenilic acid into grifolic acid. Finally, grifolic acid is reduced to ilicicolin B by the NRPS-like protein stbB. The chain is Non-reducing polyketide synthase stbA from Stachybotrys bisbyi (Hyalostachybotrys bisbyi).